Consider the following 212-residue polypeptide: uncharacterized protein (212 aa).

This sequence belongs to the flavoredoxin family. FMN serves as cofactor.

This is an uncharacterized protein from Methanothermobacter thermautotrophicus (strain ATCC 29096 / DSM 1053 / JCM 10044 / NBRC 100330 / Delta H) (Methanobacterium thermoautotrophicum).